We begin with the raw amino-acid sequence, 245 residues long: Lactate utilization protein A (245 aa).

It belongs to the LutA/YkgE family.

In terms of biological role, is involved in L-lactate degradation and allows cells to grow with lactate as the sole carbon source. This is Lactate utilization protein A from Macrococcus caseolyticus (strain JCSC5402) (Macrococcoides caseolyticum).